Consider the following 438-residue polypeptide: Succinyl-CoA:glutarate CoA-transferase (438 aa).

A mitochondrion-targeting transit peptide spans 1–31; the sequence is MLATLARVAALRRTCLFSGRGGGRGLWTGRP. Residue Asp205 is the Nucleophile of the active site. Residue Lys394 is modified to N6-acetyllysine.

It belongs to the CoA-transferase III family. As to expression, highly expressed in kidney. Intermediate expression in liver, skeletal muscle and pancreas. Little to no expression detected in other tissues examined.

Its subcellular location is the mitochondrion. The catalysed reaction is glutarate + succinyl-CoA = glutaryl-CoA + succinate. The enzyme catalyses 3-hydroxy-3-methylglutarate + succinyl-CoA = (3S)-3-hydroxy-3-methylglutaryl-CoA + succinate. It catalyses the reaction 3-hydroxy-3-methylglutarate + glutaryl-CoA = (3S)-3-hydroxy-3-methylglutaryl-CoA + glutarate. It carries out the reaction hexanedioate + glutaryl-CoA = hexanedioyl-CoA + glutarate. The catalysed reaction is itaconate + glutaryl-CoA = itaconyl-CoA + glutarate. The enzyme catalyses itaconate + succinyl-CoA = itaconyl-CoA + succinate. With respect to regulation, inhibited by valsartan and losartan carboxylate. In terms of biological role, coenzyme A (CoA) transferase that reversibly catalyzes the transfer of a CoA moiety from a dicarboxyl-CoA to a dicarboxylate in a metabolite recycling process. Displays preference for succinyl-CoA and glutarate-CoA as dicarboxyl-CoA donors and glutarate, succinate, adipate/hexanedioate, itaconate and 3-hydroxy-3-methylglutarate as dicarboxylate acceptors. Acts on intermediates or end products of lysine and tryptophan degradation pathway, in particular catalyzes succinyl-CoA-dependent reesterification of free glutarate into glutaryl-CoA to prevent renal excretion of glutarate. Upon inflammation, may convert macrophage-derived itaconate to itaconyl-CoA in erythroid precursors where it negatively regulates the TCA cycle and heme synthesis to limit erythroid differentiation in the context of stress erythropoiesis. This Homo sapiens (Human) protein is Succinyl-CoA:glutarate CoA-transferase.